The sequence spans 437 residues: Elongation factor 1-gamma (437 aa).

At A2 the chain carries N-acetylalanine. The 86-residue stretch at 2–87 (AAGTLYTYPE…YVSNEELRGS (86 aa)) folds into the GST N-terminal domain. A GST C-terminal domain is found at 88–216 (TPEAAAQVVQ…VKLCEKMAQF (129 aa)). N6-acetyllysine occurs at positions 147 and 212. Positions 221–254 (FAETQPKKDTPRKEKGSREEKQKPQAERKEEKKA) are enriched in basic and acidic residues. The segment at 221–268 (FAETQPKKDTPRKEKGSREEKQKPQAERKEEKKAAAPAPEEEMDECEQ) is disordered. K253 participates in a covalent cross-link: Glycyl lysine isopeptide (Lys-Gly) (interchain with G-Cter in SUMO1). The 162-residue stretch at 276–437 (AKDPFAHLPK…KAFNQGKIFK (162 aa)) folds into the EF-1-gamma C-terminal domain. A Glycyl lysine isopeptide (Lys-Gly) (interchain with G-Cter in SUMO2) cross-link involves residue K285. An N6-acetyllysine modification is found at K401. K434 is modified (N6-acetyllysine; alternate). Position 434 is an N6-malonyllysine; alternate (K434).

EF-1 is composed of four subunits: alpha, beta, delta, and gamma.

In terms of biological role, probably plays a role in anchoring the complex to other cellular components. This Macaca fascicularis (Crab-eating macaque) protein is Elongation factor 1-gamma (EEF1G).